The sequence spans 239 residues: Fatty acid metabolism regulator protein (239 aa).

The HTH gntR-type domain occupies 6 to 74; sequence KGPASFAEKY…HGKPTRVNNF (69 aa). A DNA-binding region (H-T-H motif) is located at residues 34-53; the sequence is ERELSELIGVTRTTLREVLQ.

Homodimer.

It localises to the cytoplasm. In terms of biological role, multifunctional regulator of fatty acid metabolism. This Shewanella pealeana (strain ATCC 700345 / ANG-SQ1) protein is Fatty acid metabolism regulator protein.